We begin with the raw amino-acid sequence, 249 residues long: Triosephosphate isomerase (249 aa).

9–11 (NWK) provides a ligand contact to substrate. The Electrophile role is filled by histidine 94. The active-site Proton acceptor is the glutamate 166. Substrate contacts are provided by residues glycine 172 and 232–233 (GG).

The protein belongs to the triosephosphate isomerase family. As to quaternary structure, homodimer.

It localises to the cytoplasm. The enzyme catalyses D-glyceraldehyde 3-phosphate = dihydroxyacetone phosphate. The protein operates within carbohydrate biosynthesis; gluconeogenesis. It functions in the pathway carbohydrate degradation; glycolysis; D-glyceraldehyde 3-phosphate from glycerone phosphate: step 1/1. Its function is as follows. Involved in the gluconeogenesis. Catalyzes stereospecifically the conversion of dihydroxyacetone phosphate (DHAP) to D-glyceraldehyde-3-phosphate (G3P). The polypeptide is Triosephosphate isomerase (Xylella fastidiosa (strain M23)).